Reading from the N-terminus, the 565-residue chain is Phosphomethylpyrimidine synthase (565 aa).

Substrate-binding positions include N201, M230, Y259, H295, 315–317 (SRG), 356–359 (DGLR), and E395. A Zn(2+)-binding site is contributed by H399. Y422 is a substrate binding site. H463 lines the Zn(2+) pocket. [4Fe-4S] cluster-binding residues include C543, C546, and C551.

Belongs to the ThiC family. In terms of assembly, homodimer. The cofactor is [4Fe-4S] cluster.

It carries out the reaction 5-amino-1-(5-phospho-beta-D-ribosyl)imidazole + S-adenosyl-L-methionine = 4-amino-2-methyl-5-(phosphooxymethyl)pyrimidine + CO + 5'-deoxyadenosine + formate + L-methionine + 3 H(+). Its pathway is cofactor biosynthesis; thiamine diphosphate biosynthesis. In terms of biological role, catalyzes the synthesis of the hydroxymethylpyrimidine phosphate (HMP-P) moiety of thiamine from aminoimidazole ribotide (AIR) in a radical S-adenosyl-L-methionine (SAM)-dependent reaction. This Ehrlichia canis (strain Jake) protein is Phosphomethylpyrimidine synthase.